The chain runs to 63 residues: Arabinogalactan protein 22 (63 aa).

Positions 1-27 (MASLKFPLEILAVFVIISVILLPIAQS) are cleaved as a signal peptide. Residues P32, P34, and P36 each carry the 4-hydroxyproline modification. P32, P34, and P36 each carry an O-linked (Ara...) hydroxyproline glycan. S38 carries the GPI-anchor amidated serine lipid modification. Positions 39–63 (DGTSIDQGIAYVLMMVALALTYFIH) are cleaved as a propeptide — removed in mature form.

Belongs to the AG-peptide AGP family. Post-translationally, contains 4-hydroxyproline; hydroxylated on Pro-32, Pro-34 and Pro-36. In terms of processing, O-glycosylated on hydroxyprolines; noncontiguous hydroxylproline residues are glycosylated with arabinogalactan.

Its subcellular location is the cell membrane. Its function is as follows. Proteoglycan that seems to be implicated in diverse developmental roles such as differentiation, cell-cell recognition, embryogenesis and programmed cell death. In Arabidopsis thaliana (Mouse-ear cress), this protein is Arabinogalactan protein 22.